Reading from the N-terminus, the 462-residue chain is GTPase HflX (462 aa).

A Hflx-type G domain is found at 255–452 (PAVGIVGYTN…LLEEKIYNLP (198 aa)). Residues 261–268 (GYTNAGKS), 286–290 (FATLD), 308–311 (DTVG), 374–377 (NKID), and 430–432 (SAY) contribute to the GTP site. Residues Ser-268 and Thr-288 each coordinate Mg(2+).

This sequence belongs to the TRAFAC class OBG-HflX-like GTPase superfamily. HflX GTPase family. As to quaternary structure, monomer. Associates with the 50S ribosomal subunit. Mg(2+) is required as a cofactor.

The protein resides in the cytoplasm. GTPase that associates with the 50S ribosomal subunit and may have a role during protein synthesis or ribosome biogenesis. The chain is GTPase HflX from Leptospira borgpetersenii serovar Hardjo-bovis (strain JB197).